The sequence spans 85 residues: uncharacterized protein (85 aa).

Positions 17–53 form a coiled coil; the sequence is KKRYEMLVQELLKEDDEEREKILAEELELLLDFLKKA.

This is an uncharacterized protein from Archaeoglobus fulgidus (strain ATCC 49558 / DSM 4304 / JCM 9628 / NBRC 100126 / VC-16).